We begin with the raw amino-acid sequence, 63 residues long: Small integral membrane protein 43 (63 aa).

Important for interaction with SLC2A1 and SLC2A3 stretches follow at residues 7–29 (LLLY…FVVI) and 51–57 (HREPWGF). Residues 9-29 (LYLALFFFLLFLLFLLLFVVI) form a helical membrane-spanning segment.

As to quaternary structure, interacts with glucose transporters SLC2A1/GLUT1 and SLC2A3/GLUT3; the interactions may promote SLC2A1- and SLC2A3-mediated glucose transport to meet the energy needs of mesendoderm differentiation.

Its subcellular location is the cell membrane. Functionally, required for mesendoderm differentiation. Interacts with glucose transporters and promotes glucose uptake. Probably augments the glucose uptake capacity of glucose transporter proteins to meet the energy needs of mesendoderm differentiation. This chain is Small integral membrane protein 43, found in Homo sapiens (Human).